A 363-amino-acid polypeptide reads, in one-letter code: MNILQEPIDFLKKEELKNIDLSQMSKKERYKIWKRIPKCELHCHLDLCFSADFFVSCIRKYNLQPNLSDEEVLDYYLFAKGGKSLGEFVEKAIKVADIFHDYEVIEDLAKHAVFNKYKEGVVLMEFRYSPTFVAFKYNLDIELIHQAIVKGIKEVVELLDHKIHVALMCIGDTGHEAANIKASADFCLKHKADFVGFDHGGHEVDLKEYKEIFDYVRESGVPLSVHAGEDVTLPNLNTLYSAIQVLKVERIGHGIRVAESQELIDMVKEKNILLEVCPISNVLLKNAKSMDTHPIRQLYDAGVKVSVNSDDPGMFLTNINDDYEELYTHLNFTLEDFMKMNEWALEKSFMDSNIKDKIKNLYF.

Residues histidine 42 and histidine 44 each coordinate Zn(2+). A purine D-ribonucleoside contacts are provided by residues 44 to 46 (HLD), aspartate 172, and glycine 201. The tract at residues 170-184 (IGDTGHEAANIKASA) is gating helix loop; regulates binding affinity for substrates and thus substrate selectivity. Histidine 226 provides a ligand contact to Zn(2+). A purine D-ribonucleoside-binding residues include glutamate 229, histidine 253, and aspartate 310. Residue aspartate 310 coordinates Zn(2+).

It belongs to the metallo-dependent hydrolases superfamily. Adenosine and AMP deaminases family. Zn(2+) is required as a cofactor.

The enzyme catalyses adenosine + H2O + H(+) = inosine + NH4(+). It carries out the reaction S-methyl-5'-thioadenosine + H2O + H(+) = S-methyl-5'-thioinosine + NH4(+). It participates in purine metabolism; purine nucleoside salvage. Inhibited by coformycin and methylthiocoformycin (MT-coformycin). In terms of biological role, catalyzes the hydrolytic deamination of adenosine to produce inosine. Unlike mammalian adenosine deaminases, also catalyzes the deamination of 5'-methylthioadenosine (MTA), a by-product of polyamine biosynthesis, to produce 5'-methylthioinosine (MTI). Plays an essential role in the purine salvage pathway which allows the parasite to use host cell purines for the synthesis of nucleic acids. This is Adenosine deaminase from Plasmodium vivax (strain Salvador I).